A 102-amino-acid chain; its full sequence is Small ribosomal subunit protein uS10 (102 aa).

This sequence belongs to the universal ribosomal protein uS10 family. Part of the 30S ribosomal subunit.

In terms of biological role, involved in the binding of tRNA to the ribosomes. This is Small ribosomal subunit protein uS10 from Bacillus cereus (strain ATCC 10987 / NRS 248).